The following is a 439-amino-acid chain: Damage-control phosphatase ARMT1 (439 aa).

Position 2 is an N-acetylalanine (alanine 2). At serine 4 the chain carries Phosphoserine. Lysine 40 is subject to N6-acetyllysine. The Mn(2+) site is built by aspartate 251 and asparagine 252. 251–252 (DN) is a binding site for substrate. Residues glutamate 256 and aspartate 289 each contribute to the S-adenosyl-L-methionine site. Aspartate 289 contacts Mn(2+). Substrate is bound by residues 365-369 (DLNYR) and lysine 402. Positions 399–402 (RTLK) match the Subfamily III RTxK motif motif.

Belongs to the damage-control phosphatase family. Sugar phosphate phosphatase III subfamily. Mn(2+) is required as a cofactor. Requires Ni(2+) as cofactor. Post-translationally, automethylated.

The enzyme catalyses beta-D-fructose 1-phosphate + H2O = D-fructose + phosphate. The catalysed reaction is beta-D-fructose 6-phosphate = dihydroxyacetone + D-glyceraldehyde 3-phosphate. It carries out the reaction L-glutamyl-[protein] + S-adenosyl-L-methionine = [protein]-L-glutamate 5-O-methyl ester + S-adenosyl-L-homocysteine. Metal-dependent phosphatase that shows phosphatase activity against several substrates, including fructose-1-phosphate and fructose-6-phosphate. Its preference for fructose-1-phosphate, a strong glycating agent that causes DNA damage rather than a canonical yeast metabolite, suggests a damage-control function in hexose phosphate metabolism. Has also been shown to have O-methyltransferase activity that methylates glutamate residues of target proteins to form gamma-glutamyl methyl ester residues. Possibly methylates PCNA, suggesting it is involved in the DNA damage response. The polypeptide is Damage-control phosphatase ARMT1 (Mus musculus (Mouse)).